Reading from the N-terminus, the 378-residue chain is Protein SLG1 (378 aa).

The first 21 residues, 1-21, serve as a signal peptide directing secretion; sequence MRPNKTSLLLALLSILSQANA. One can recognise a WSC domain in the interval 22–110; the sequence is YEYVNCFSSL…EDAYSVYQLD (89 aa). The Extracellular segment spans residues 22–264; it reads YEYVNCFSSL…THKKKANVGA (243 aa). A glycan (N-linked (GlcNAc...) asparagine) is linked at Asn65. 2 disordered regions span residues 115–201 and 236–256; these read SNSI…TSST and QNSGSATGTAGSDSTSGSKTH. The segment covering 236 to 253 has biased composition (low complexity); it reads QNSGSATGTAGSDSTSGS. A helical transmembrane segment spans residues 265–285; sequence IVGGVVGGVVGAVAIALCILL. The Cytoplasmic portion of the chain corresponds to 286–378; it reads IVRHINMKRE…LTVVNPDEAD (93 aa). The disordered stretch occupies residues 318–378; that stretch reads ASSFSSNHGP…LTVVNPDEAD (61 aa). Low complexity predominate over residues 319–331; it reads SSFSSNHGPSSGS. Ser331 and Ser353 each carry phosphoserine.

In terms of processing, glycosylated. Phosphorylated. Phosphorylation serves a negative regulatory role.

Its subcellular location is the cell membrane. Plays a role during G1 to regulate entering or exiting the cell cycle. Involved in stress responses. Has a role in cell wall integrity signaling. Activates ROM1 or ROM2 catalyzed guanine nucleotide exchange toward RHO1. Important regulator of the actin cytoskeleton rearrangements in conditions of cell wall expansion and membrane stretching. Specifically required for the actin reorganization induced by hypo-osmotic shock. Multicopy suppressor of 1,3-beta-glucan synthase (GS). Activates GS upstream of RHO1. Acts positively on the PKC1-MAPK pathway. Activates transiently SLT2 during alkaline stress, which leads to an increase in the expression of several specific genes. This is Protein SLG1 (SLG1) from Saccharomyces cerevisiae (strain ATCC 204508 / S288c) (Baker's yeast).